Reading from the N-terminus, the 568-residue chain is Urease subunit alpha (568 aa).

In terms of domain architecture, Urease spans 133-568; it reads GGLDIHIHFN…ELPLAQRYLL (436 aa). Histidine 138, histidine 140, and lysine 217 together coordinate Ni(2+). At lysine 217 the chain carries N6-carboxylysine. Histidine 219 contacts substrate. Ni(2+) contacts are provided by histidine 246 and histidine 272. Catalysis depends on histidine 320, which acts as the Proton donor. Aspartate 360 provides a ligand contact to Ni(2+).

Belongs to the metallo-dependent hydrolases superfamily. Urease alpha subunit family. As to quaternary structure, heterotrimer of UreA (gamma), UreB (beta) and UreC (alpha) subunits. Three heterotrimers associate to form the active enzyme. Requires Ni cation as cofactor. In terms of processing, carboxylation allows a single lysine to coordinate two nickel ions.

It localises to the cytoplasm. It catalyses the reaction urea + 2 H2O + H(+) = hydrogencarbonate + 2 NH4(+). Its pathway is nitrogen metabolism; urea degradation; CO(2) and NH(3) from urea (urease route): step 1/1. The protein is Urease subunit alpha of Haloarcula marismortui (strain ATCC 43049 / DSM 3752 / JCM 8966 / VKM B-1809) (Halobacterium marismortui).